The following is a 453-amino-acid chain: uncharacterized protein (453 aa).

A TRAM domain is found at 5 to 63 (LLKKNQSIELTIEDLTHDGSGVGKIDGYPLFIPNTLPGEKVTAKIIKLNKNYGFARMEN). [4Fe-4S] cluster is bound by residues C76, C82, C85, and C162. Residues Q285, Y314, E335, and D383 each coordinate S-adenosyl-L-methionine. The active-site Nucleophile is the C410.

Belongs to the class I-like SAM-binding methyltransferase superfamily. RNA M5U methyltransferase family.

This is an uncharacterized protein from Listeria monocytogenes serotype 4b (strain F2365).